A 410-amino-acid polypeptide reads, in one-letter code: Single Ig IL-1-related receptor (410 aa).

Over 1–118 the chain is Extracellular; it reads MPGVCDRAPD…TLQRAGPTSH (118 aa). The region spanning 9–109 is the Ig-like C2-type domain; the sequence is PDFLSPSEDQ…IQNISFSSFT (101 aa). Residues N31, N73, N86, and N102 are each glycosylated (N-linked (GlcNAc...) asparagine). Cysteines 32 and 98 form a disulfide. A helical; Signal-anchor for type III membrane protein transmembrane segment spans residues 119-139; it reads VAAVLASLLVLLALLLAALLY. Residues 140–410 are Cytoplasmic-facing; it reads VKCRLNVLLW…FYCLVSKDDM (271 aa). Residues 163–307 form the TIR domain; sequence KLYDAYVSYS…DFWKEVQLAL (145 aa). The segment at 340 to 390 is disordered; it reads EGRALDSEVDPDPEGDLGVRGPVFGEPSAPPHTSGVSLGESRSSEVDVSDL. Residue S383 is modified to Phosphoserine.

The protein belongs to the interleukin-1 receptor family. As to quaternary structure, interacts with IL1R1, IRAK1, TLR4, TLR5, TLR9 and TRAF6. Upon IL-1 stimulation found in a complex at least composed of IL1R1, SIGIRR, MYD88, IRAK1 and TRAF6. Upon stimulation with LPC found in a complex at least composed of TLR4, SIG1IR, MYD88, IRAK1 and TRAF6. Interacts with PALM3. Mainly expressed in epithelial tissues such as kidney, lung and gut.

It localises to the membrane. Its function is as follows. Acts as a negative regulator of the Toll-like and IL-1R receptor signaling pathways. Attenuates the recruitment of receptor-proximal signaling components to the TLR4 receptor, probably through an TIR-TIR domain interaction with TLR4. Through its extracellular domain interferes with the heterodimerization of Il1R1 and IL1RAP. This is Single Ig IL-1-related receptor (SIGIRR) from Homo sapiens (Human).